The primary structure comprises 192 residues: Riboflavin kinase (192 aa).

The Mg(2+) site is built by T47 and N49. E129 functions as the Nucleophile in the catalytic mechanism.

The protein belongs to the flavokinase family. Zn(2+) serves as cofactor. Requires Mg(2+) as cofactor.

The catalysed reaction is riboflavin + ATP = FMN + ADP + H(+). It participates in cofactor biosynthesis; FMN biosynthesis; FMN from riboflavin (ATP route): step 1/1. In terms of biological role, catalyzes the phosphorylation of riboflavin (vitamin B2) to form flavin mononucleotide (FMN) coenzyme. This Yarrowia lipolytica (strain CLIB 122 / E 150) (Yeast) protein is Riboflavin kinase (FMN1).